The chain runs to 195 residues: ALK and LTK ligand 2b (195 aa).

Disulfide bonds link Cys156/Cys192 and Cys170/Cys179.

Belongs to the ALKAL family. As to quaternary structure, homodimer. As to expression, highly expressed in the swim bladder and single cells of unknown identity in the head.

It localises to the secreted. The protein localises to the cell membrane. Cytokine that acts as a physiological ligand for receptor tyrosine kinases LTK and ALK. Required for neural crest cell differentiation and iridophore development during embryonic iridophore development and adult stripe development by acting as a receptor for LTK. Also required for iridophore formation in the adult eye. The chain is ALK and LTK ligand 2b from Danio rerio (Zebrafish).